The sequence spans 487 residues: E3 ubiquitin-protein ligase RNF8 (487 aa).

Residues 38–92 form the FHA domain; that stretch reads VTVGRGFGVTYQLVSKICPLMISRNHCILKQNAEGQWTIKDNKSLNGVWLNRERL. A required for interaction with PIWIL1 region spans residues 68 to 72; that stretch reads QNAEG. Disordered stretches follow at residues 143-176 and 182-201; these read MMEKNKGLRTKRKFSLDELEGSGAEGPSNLKSKI and EPGQQVKSHGKGKVASQPSE. Residue S157 is modified to Phosphoserine. The RING-type zinc-finger motif lies at 405–443; the sequence is CIICSEYFVEAVTLNCAHSFCSYCINEWMKRKVECPICR.

Belongs to the RNF8 family. In terms of assembly, homodimer. Forms a E2-E3 ubiquitin ligase complex composed of the RNF8 homodimer and a E2 heterodimer of UBE2N and UBE2V2. Interacts with class III E2s, including UBE2E1, UBE2E2, and UBE2E3 and with UBE2N. Interacts with RXRA. Interacts (via FHA domain) with phosphorylated HERC2 (via C-terminus). Interacts with PIWIL1; leading to sequester RNF8 in the cytoplasm. Interacts with WRAP53/TCAB1. In terms of processing, autoubiquitinated through 'Lys-48' and 'Lys-63' of ubiquitin. 'Lys-63' polyubiquitination is mediated by UBE2N. 'Lys-29'-type polyubiquitination is also observed, but it doesn't require its own functional RING-type zinc finger.

The protein resides in the nucleus. The protein localises to the cytoplasm. Its subcellular location is the midbody. It localises to the chromosome. It is found in the telomere. The enzyme catalyses S-ubiquitinyl-[E2 ubiquitin-conjugating enzyme]-L-cysteine + [acceptor protein]-L-lysine = [E2 ubiquitin-conjugating enzyme]-L-cysteine + N(6)-ubiquitinyl-[acceptor protein]-L-lysine.. The protein operates within protein modification; protein ubiquitination. E3 ubiquitin-protein ligase that plays a key role in DNA damage signaling via 2 distinct roles: by mediating the 'Lys-63'-linked ubiquitination of histones H2A and H2AX and promoting the recruitment of DNA repair proteins at double-strand breaks (DSBs) sites, and by catalyzing 'Lys-48'-linked ubiquitination to remove target proteins from DNA damage sites. Following DNA DSBs, it is recruited to the sites of damage by ATM-phosphorylated MDC1 and catalyzes the 'Lys-63'-linked ubiquitination of histones H2A and H2AX, thereby promoting the formation of TP53BP1 and BRCA1 ionizing radiation-induced foci (IRIF). Also controls the recruitment of UIMC1-BRCC3 (RAP80-BRCC36) and PAXIP1/PTIP to DNA damage sites. Promotes the recruitment of NBN to DNA damage sites by catalyzing 'Lys-6'-linked ubiquitination of NBN. Also recruited at DNA interstrand cross-links (ICLs) sites and catalyzes 'Lys-63'-linked ubiquitination of histones H2A and H2AX, leading to recruitment of FAAP20 and Fanconi anemia (FA) complex, followed by interstrand cross-link repair. H2A ubiquitination also mediates the ATM-dependent transcriptional silencing at regions flanking DSBs in cis, a mechanism to avoid collision between transcription and repair intermediates. Promotes the formation of 'Lys-63'-linked polyubiquitin chains via interactions with the specific ubiquitin-conjugating UBE2N/UBC13 and ubiquitinates non-histone substrates such as PCNA. Substrates that are polyubiquitinated at 'Lys-63' are usually not targeted for degradation. Also catalyzes the formation of 'Lys-48'-linked polyubiquitin chains via interaction with the ubiquitin-conjugating UBE2L6/UBCH8, leading to degradation of substrate proteins such as CHEK2, JMJD2A/KDM4A and KU80/XRCC5: it is still unclear how the preference toward 'Lys-48'- versus 'Lys-63'-linked ubiquitination is regulated but it could be due to RNF8 ability to interact with specific E2 specific ligases. For instance, interaction with phosphorylated HERC2 promotes the association between RNF8 and UBE2N/UBC13 and favors the specific formation of 'Lys-63'-linked ubiquitin chains. Promotes non-homologous end joining (NHEJ) by promoting the 'Lys-48'-linked ubiquitination and degradation the of KU80/XRCC5. Following DNA damage, mediates the ubiquitination and degradation of JMJD2A/KDM4A in collaboration with RNF168, leading to unmask H4K20me2 mark and promote the recruitment of TP53BP1 at DNA damage sites. Following DNA damage, mediates the ubiquitination and degradation of POLD4/p12, a subunit of DNA polymerase delta. In the absence of POLD4, DNA polymerase delta complex exhibits higher proofreading activity. In addition to its function in damage signaling, also plays a role in higher-order chromatin structure by mediating extensive chromatin decondensation. Involved in the activation of ATM by promoting histone H2B ubiquitination, which indirectly triggers histone H4 'Lys-16' acetylation (H4K16ac), establishing a chromatin environment that promotes efficient activation of ATM kinase. Required in the testis, where it plays a role in the replacement of histones during spermatogenesis. At uncapped telomeres, promotes the joining of deprotected chromosome ends by inducing H2A ubiquitination and TP53BP1 recruitment, suggesting that it may enhance cancer development by aggravating telomere-induced genome instability in case of telomeric crisis. Promotes the assembly of RAD51 at DNA DSBs in the absence of BRCA1 and TP53BP1 Also involved in class switch recombination in immune system, via its role in regulation of DSBs repair. May be required for proper exit from mitosis after spindle checkpoint activation and may regulate cytokinesis. May play a role in the regulation of RXRA-mediated transcriptional activity. Not involved in RXRA ubiquitination by UBE2E2. The polypeptide is E3 ubiquitin-protein ligase RNF8 (Bos taurus (Bovine)).